Here is a 461-residue protein sequence, read N- to C-terminus: V-type ATP synthase beta chain 1 (461 aa).

Belongs to the ATPase alpha/beta chains family.

Its function is as follows. Produces ATP from ADP in the presence of a proton gradient across the membrane. The V-type beta chain is a regulatory subunit. The chain is V-type ATP synthase beta chain 1 from Clostridium tetani (strain Massachusetts / E88).